A 501-amino-acid chain; its full sequence is Proline--tRNA ligase (501 aa).

This sequence belongs to the class-II aminoacyl-tRNA synthetase family.

It catalyses the reaction tRNA(Pro) + L-proline + ATP = L-prolyl-tRNA(Pro) + AMP + diphosphate. In Encephalitozoon cuniculi (strain GB-M1) (Microsporidian parasite), this protein is Proline--tRNA ligase.